A 142-amino-acid chain; its full sequence is Large-conductance mechanosensitive channel (142 aa).

A run of 3 helical transmembrane segments spans residues 14-34 (VMDL…VTSV), 38-58 (LVMP…NYFL), and 82-102 (GSFI…FLLV).

This sequence belongs to the MscL family. Homopentamer.

It localises to the cell inner membrane. Its function is as follows. Channel that opens in response to stretch forces in the membrane lipid bilayer. May participate in the regulation of osmotic pressure changes within the cell. The protein is Large-conductance mechanosensitive channel of Sinorhizobium fredii (strain NBRC 101917 / NGR234).